We begin with the raw amino-acid sequence, 407 residues long: uncharacterized protein (407 aa).

Disordered regions lie at residues 1-64, 110-276, and 314-341; these read MSRK…EPFD, GFGP…YPQF, and QSRP…HNNP. The span at 7–32 shows a compositional bias: polar residues; that stretch reads KQSNPKRNYKNDNYFQENSYTMTNGF. The span at 33 to 44 shows a compositional bias: basic and acidic residues; the sequence is TKDKDGKPVEFK. A compositionally biased stretch (acidic residues) spans 122–137; it reads DSDSEYSDECLTDECS. 2 stretches are compositionally biased toward polar residues: residues 138–147 and 184–201; these read DNYNKQSTDS and NFDN…NSQP. The segment covering 209 to 231 has biased composition (low complexity); that stretch reads SKSSSKSSKSNKSNKSSKSNKSS. A compositionally biased stretch (basic residues) spans 232-246; it reads KSSKSKSNKHSKHKN. The span at 247-258 shows a compositional bias: basic and acidic residues; it reads KSDSSSDSDEKT. 2 stretches are compositionally biased toward basic residues: residues 259–270 and 316–341; these read HKHKDRRHRRGR and RPRK…HNNP.

This is an uncharacterized protein from Acanthamoeba polyphaga mimivirus (APMV).